A 121-amino-acid chain; its full sequence is Protein yippee-like 5 (121 aa).

The 98-residue stretch at 13–110 folds into the Yippee domain; that stretch reads RLFSCANCDA…LERALVRESE (98 aa). Residues cysteine 17, cysteine 20, cysteine 73, and cysteine 76 each coordinate Zn(2+). Serine 118 is subject to Phosphoserine.

The protein belongs to the yippee family. Identified in the CTLH complex that contains GID4, RANBP9 and/or RANBP10, MKLN1, MAEA, RMND5A (or alternatively its paralog RMND5B), GID8, ARMC8, WDR26 and YPEL5. Within this complex, MAEA, RMND5A (or alternatively its paralog RMND5B), GID8, WDR26, and RANBP9 and/or RANBP10 form the catalytic core, while GID4, MKLN1, ARMC8 and YPEL5 have ancillary roles. Interacts with RANBP9 and RANBP10.

The protein resides in the nucleus. It localises to the cytoplasm. The protein localises to the cytoskeleton. It is found in the microtubule organizing center. Its subcellular location is the centrosome. The protein resides in the spindle pole. It localises to the midbody. Its function is as follows. Component of the CTLH E3 ubiquitin-protein ligase complex that selectively accepts ubiquitin from UBE2H and mediates ubiquitination and subsequent proteasomal degradation of the transcription factor HBP1. Required for normal cell proliferation. The protein is Protein yippee-like 5 (YPEL5) of Macaca fascicularis (Crab-eating macaque).